Consider the following 182-residue polypeptide: MWKLSRSRVLLDEPPEEEDVLRGASPASAAAQAPGASLRGWKEATSLFNKDDEERLLETSRSSKSKGTNVRLKEELKAEKKSGFWDALVLKQNVQPKKPDQMEGWEPPKLTAEDVATDHTEDGISSLPPWSAWEDDTKGSTKYTSLASSASSSRWSLRSAGKLVSIRRQSKGHLTETCEEVE.

2 disordered regions span residues 1-71 (MWKL…TNVR) and 117-152 (TDHTEDGISSLPPWSAWEDDTKGSTKYTSLASSASS). Ser7 carries the post-translational modification Phosphoserine. Positions 22–37 (RGASPASAAAQAPGAS) are enriched in low complexity. Basic and acidic residues predominate over residues 49–58 (NKDDEERLLE). The segment covering 59–68 (TSRSSKSKGT) has biased composition (polar residues).

This sequence belongs to the TDRP family. As to quaternary structure, interacts with PRM2. In terms of tissue distribution, predominantly expressed in testis.

It localises to the nucleus. Its subcellular location is the cytoplasm. Its function is as follows. Contributes to normal sperm motility, but not essential for male fertility. This is Testis development-related protein (Tdrp) from Rattus norvegicus (Rat).